The primary structure comprises 510 residues: Proline--tRNA ligase 2 (510 aa).

This sequence belongs to the class-II aminoacyl-tRNA synthetase family. ProS type 3 subfamily. Homodimer.

It localises to the cytoplasm. It carries out the reaction tRNA(Pro) + L-proline + ATP = L-prolyl-tRNA(Pro) + AMP + diphosphate. Catalyzes the attachment of proline to tRNA(Pro) in a two-step reaction: proline is first activated by ATP to form Pro-AMP and then transferred to the acceptor end of tRNA(Pro). In Anaeromyxobacter dehalogenans (strain 2CP-C), this protein is Proline--tRNA ligase 2.